A 358-amino-acid chain; its full sequence is 3-isopropylmalate dehydrogenase (358 aa).

77–90 (GPKWTHLPPDQQPE) is a binding site for NAD(+). Residues Arg-98, Arg-108, Arg-137, and Asp-226 each contribute to the substrate site. Asp-226, Asp-250, and Asp-254 together coordinate Mg(2+). 284–296 (GSAPDIAGKGIAN) provides a ligand contact to NAD(+).

Belongs to the isocitrate and isopropylmalate dehydrogenases family. LeuB type 1 subfamily. As to quaternary structure, homodimer. Mg(2+) is required as a cofactor. The cofactor is Mn(2+).

Its subcellular location is the cytoplasm. It catalyses the reaction (2R,3S)-3-isopropylmalate + NAD(+) = 4-methyl-2-oxopentanoate + CO2 + NADH. It participates in amino-acid biosynthesis; L-leucine biosynthesis; L-leucine from 3-methyl-2-oxobutanoate: step 3/4. In terms of biological role, catalyzes the oxidation of 3-carboxy-2-hydroxy-4-methylpentanoate (3-isopropylmalate) to 3-carboxy-4-methyl-2-oxopentanoate. The product decarboxylates to 4-methyl-2 oxopentanoate. This Mannheimia succiniciproducens (strain KCTC 0769BP / MBEL55E) protein is 3-isopropylmalate dehydrogenase.